Reading from the N-terminus, the 391-residue chain is Succinate--CoA ligase [ADP-forming] subunit beta (391 aa).

Positions 9-245 constitute an ATP-grasp domain; it reads KQIFAKYGVP…ISEEDADERE (237 aa). Residues Lys46, 53–55, Glu99, Ala102, and Glu107 contribute to the ATP site; that span reads GRG. Mg(2+)-binding residues include Asn200 and Asp214. Residues Asn265 and 322–324 contribute to the substrate site; that span reads GIV.

It belongs to the succinate/malate CoA ligase beta subunit family. As to quaternary structure, heterotetramer of two alpha and two beta subunits. It depends on Mg(2+) as a cofactor.

The enzyme catalyses succinate + ATP + CoA = succinyl-CoA + ADP + phosphate. The catalysed reaction is GTP + succinate + CoA = succinyl-CoA + GDP + phosphate. The protein operates within carbohydrate metabolism; tricarboxylic acid cycle; succinate from succinyl-CoA (ligase route): step 1/1. Functionally, succinyl-CoA synthetase functions in the citric acid cycle (TCA), coupling the hydrolysis of succinyl-CoA to the synthesis of either ATP or GTP and thus represents the only step of substrate-level phosphorylation in the TCA. The beta subunit provides nucleotide specificity of the enzyme and binds the substrate succinate, while the binding sites for coenzyme A and phosphate are found in the alpha subunit. This is Succinate--CoA ligase [ADP-forming] subunit beta from Sulfurimonas denitrificans (strain ATCC 33889 / DSM 1251) (Thiomicrospira denitrificans (strain ATCC 33889 / DSM 1251)).